Reading from the N-terminus, the 315-residue chain is Methionyl-tRNA formyltransferase (315 aa).

Residue 115–118 coordinates (6S)-5,6,7,8-tetrahydrofolate; sequence SLLP.

The protein belongs to the Fmt family.

It carries out the reaction L-methionyl-tRNA(fMet) + (6R)-10-formyltetrahydrofolate = N-formyl-L-methionyl-tRNA(fMet) + (6S)-5,6,7,8-tetrahydrofolate + H(+). In terms of biological role, attaches a formyl group to the free amino group of methionyl-tRNA(fMet). The formyl group appears to play a dual role in the initiator identity of N-formylmethionyl-tRNA by promoting its recognition by IF2 and preventing the misappropriation of this tRNA by the elongation apparatus. The polypeptide is Methionyl-tRNA formyltransferase (Dehalococcoides mccartyi (strain ATCC BAA-2100 / JCM 16839 / KCTC 5957 / BAV1)).